We begin with the raw amino-acid sequence, 533 residues long: Malate synthase A (533 aa).

The Proton acceptor role is filled by Arg-166. Asp-447 functions as the Proton donor in the catalytic mechanism.

It belongs to the malate synthase family.

The protein localises to the cytoplasm. It carries out the reaction glyoxylate + acetyl-CoA + H2O = (S)-malate + CoA + H(+). The protein operates within carbohydrate metabolism; glyoxylate cycle; (S)-malate from isocitrate: step 2/2. This is Malate synthase A (aceB) from Escherichia coli (strain K12).